A 240-amino-acid chain; its full sequence is Uridylate kinase (240 aa).

13-16 contributes to the ATP binding site; that stretch reads KASG. Positions 21-26 are involved in allosteric activation by GTP; it reads GSQGFG. A UMP-binding site is contributed by glycine 55. ATP is bound by residues glycine 56 and arginine 60. UMP contacts are provided by residues aspartate 75 and 136-143; that span reads TGNPFFTT. ATP-binding residues include threonine 163, glutamine 164, tyrosine 169, and aspartate 172.

It belongs to the UMP kinase family. In terms of assembly, homohexamer.

Its subcellular location is the cytoplasm. It catalyses the reaction UMP + ATP = UDP + ADP. The protein operates within pyrimidine metabolism; CTP biosynthesis via de novo pathway; UDP from UMP (UMPK route): step 1/1. Allosterically activated by GTP. Inhibited by UTP. In terms of biological role, catalyzes the reversible phosphorylation of UMP to UDP. The sequence is that of Uridylate kinase from Sinorhizobium medicae (strain WSM419) (Ensifer medicae).